A 371-amino-acid chain; its full sequence is Heterodimeric geranylgeranyl pyrophosphate synthase large subunit 1, chloroplastic (371 aa).

The N-terminal 51 residues, 1–51 (MASVTLGSWIVVHHHNHHHPSSILTKSRSRSCPITLTKPISFRSKRTVSSS), are a transit peptide targeting the chloroplast. S52 carries the N-acetylserine modification. Isopentenyl diphosphate contacts are provided by K116, R119, and H148. Residues D155 and D161 each coordinate Mg(2+). A dimethylallyl diphosphate-binding site is contributed by R166. R167 provides a ligand contact to isopentenyl diphosphate. Dimethylallyl diphosphate-binding residues include K256, T257, Q294, K311, and K321.

This sequence belongs to the FPP/GGPP synthase family. In terms of assembly, forms homodimers. Part of a heterodimeric geranyl(geranyl)diphosphate synthase. Interacts with GGR. The cofactor is Mg(2+). In terms of tissue distribution, expressed ubiquitously.

It is found in the plastid. It localises to the chloroplast. The protein resides in the cytoplasm. It catalyses the reaction isopentenyl diphosphate + dimethylallyl diphosphate = (2E)-geranyl diphosphate + diphosphate. The catalysed reaction is isopentenyl diphosphate + (2E)-geranyl diphosphate = (2E,6E)-farnesyl diphosphate + diphosphate. The enzyme catalyses isopentenyl diphosphate + (2E,6E)-farnesyl diphosphate = (2E,6E,10E)-geranylgeranyl diphosphate + diphosphate. The protein operates within isoprenoid biosynthesis; farnesyl diphosphate biosynthesis; farnesyl diphosphate from geranyl diphosphate and isopentenyl diphosphate: step 1/1. It participates in isoprenoid biosynthesis; geranyl diphosphate biosynthesis; geranyl diphosphate from dimethylallyl diphosphate and isopentenyl diphosphate: step 1/1. It functions in the pathway isoprenoid biosynthesis; geranylgeranyl diphosphate biosynthesis; geranylgeranyl diphosphate from farnesyl diphosphate and isopentenyl diphosphate: step 1/1. Its function is as follows. Heterodimeric geranyl(geranyl)-diphosphate (GPP) synthase large subunit. In vitro, the large subunit catalyzes mainly the trans-addition of the three molecules of IPP onto DMAPP to form geranylgeranyl pyrophosphate while the small subunit alone is inactive. Upon association of the two subunits, the product profile changes and the production of gerany-diphosphate is strongly increased. This chain is Heterodimeric geranylgeranyl pyrophosphate synthase large subunit 1, chloroplastic (GGPPS1), found in Arabidopsis thaliana (Mouse-ear cress).